A 316-amino-acid polypeptide reads, in one-letter code: Secreted effector protein SifB (316 aa).

This sequence belongs to the Sif family.

Its subcellular location is the secreted. The protein localises to the host cytoplasm. Functionally, effector proteins function to alter host cell physiology and promote bacterial survival in host tissues. In Salmonella typhimurium (strain LT2 / SGSC1412 / ATCC 700720), this protein is Secreted effector protein SifB (sifB).